The sequence spans 600 residues: Proline--tRNA ligase (600 aa).

This sequence belongs to the class-II aminoacyl-tRNA synthetase family. ProS type 1 subfamily. In terms of assembly, homodimer.

It is found in the cytoplasm. The enzyme catalyses tRNA(Pro) + L-proline + ATP = L-prolyl-tRNA(Pro) + AMP + diphosphate. In terms of biological role, catalyzes the attachment of proline to tRNA(Pro) in a two-step reaction: proline is first activated by ATP to form Pro-AMP and then transferred to the acceptor end of tRNA(Pro). As ProRS can inadvertently accommodate and process non-cognate amino acids such as alanine and cysteine, to avoid such errors it has two additional distinct editing activities against alanine. One activity is designated as 'pretransfer' editing and involves the tRNA(Pro)-independent hydrolysis of activated Ala-AMP. The other activity is designated 'posttransfer' editing and involves deacylation of mischarged Ala-tRNA(Pro). The misacylated Cys-tRNA(Pro) is not edited by ProRS. The polypeptide is Proline--tRNA ligase (Synechococcus sp. (strain RCC307)).